A 292-amino-acid chain; its full sequence is Oxidative stress-responsive serine-rich protein 1 (292 aa).

A disordered region spans residues Ser27–Ala175. Residues Ser65–Lys83 show a composition bias toward basic residues. A phosphothreonine mark is found at Thr143 and Thr233.

This Pongo abelii (Sumatran orangutan) protein is Oxidative stress-responsive serine-rich protein 1 (OSER1).